The following is a 117-amino-acid chain: Cell division protein FtsB (117 aa).

The Cytoplasmic portion of the chain corresponds to 1–6 (MRDWRW). The helical transmembrane segment at 7–24 (MLLVLALLLGWLQYRFWF) threads the bilayer. Topologically, residues 25–117 (GPGNSGEVMM…QVGDHPADVP (93 aa)) are periplasmic. A coiled-coil region spans residues 29 to 69 (SGEVMMLEAQVANQERDNEGLQQRNDALAAEVKDLKEGQSA).

Belongs to the FtsB family. Part of a complex composed of FtsB, FtsL and FtsQ.

The protein resides in the cell inner membrane. Essential cell division protein. May link together the upstream cell division proteins, which are predominantly cytoplasmic, with the downstream cell division proteins, which are predominantly periplasmic. The polypeptide is Cell division protein FtsB (Stenotrophomonas maltophilia (strain K279a)).